Reading from the N-terminus, the 430-residue chain is MHDIRAIRENPAAFDAALARRGEAPMSQAILALDTARRAKINAAENAQAEQNKASKEVGQAKAQGDEATFEKLRALVSEKKALVAEMQADAKALDAELTEKLSWIANIPADDVPDGADEDDNVEVRRWGHLPDFEFTPKEHYEIGGVAASMDFDTAAKTSGARFVMLKGAVARIHRALSQFMIDTHVDHNGLTEINSPVLVRDDAMYGTDKLPKFAEDSYQTTNGWWLVSTSEIPLTYTVAGDILDAAALPIRLTAHTLCFRSEAGSAGRDTAGMLRQHQFEKVEMVSITEPDQSEAEQQRMLRCAEDILERLGLPYRTVLLCTGDMGFGARRTFDIEAWLPGQNNYREISSVSTTGDFQARRMNARYKPADGGKPQFVHTLNGSGLAVGRCLIAVLENGQQADGSVVLPPVLAGYLGGKTVLSAEGTLV.

Residue Thr-231 to Glu-233 participates in L-serine binding. Arg-262–Glu-264 contacts ATP. L-serine is bound at residue Glu-285. Glu-349–Ser-352 contributes to the ATP binding site. Ser-385 contributes to the L-serine binding site.

Belongs to the class-II aminoacyl-tRNA synthetase family. Type-1 seryl-tRNA synthetase subfamily. Homodimer. The tRNA molecule binds across the dimer.

The protein resides in the cytoplasm. The enzyme catalyses tRNA(Ser) + L-serine + ATP = L-seryl-tRNA(Ser) + AMP + diphosphate + H(+). It catalyses the reaction tRNA(Sec) + L-serine + ATP = L-seryl-tRNA(Sec) + AMP + diphosphate + H(+). Its pathway is aminoacyl-tRNA biosynthesis; selenocysteinyl-tRNA(Sec) biosynthesis; L-seryl-tRNA(Sec) from L-serine and tRNA(Sec): step 1/1. Its function is as follows. Catalyzes the attachment of serine to tRNA(Ser). Is also able to aminoacylate tRNA(Sec) with serine, to form the misacylated tRNA L-seryl-tRNA(Sec), which will be further converted into selenocysteinyl-tRNA(Sec). The sequence is that of Serine--tRNA ligase from Roseobacter denitrificans (strain ATCC 33942 / OCh 114) (Erythrobacter sp. (strain OCh 114)).